The chain runs to 139 residues: D-ribose pyranase (139 aa).

His20 (proton donor) is an active-site residue. Residues Asp28, His106, and 128–130 each bind substrate; that span reads YAN.

The protein belongs to the RbsD / FucU family. RbsD subfamily. Homodecamer.

It localises to the cytoplasm. The enzyme catalyses beta-D-ribopyranose = beta-D-ribofuranose. It functions in the pathway carbohydrate metabolism; D-ribose degradation; D-ribose 5-phosphate from beta-D-ribopyranose: step 1/2. In terms of biological role, catalyzes the interconversion of beta-pyran and beta-furan forms of D-ribose. This is D-ribose pyranase from Shewanella pealeana (strain ATCC 700345 / ANG-SQ1).